The following is a 699-amino-acid chain: D-(-)-3-hydroxybutyrate oligomer hydrolase (699 aa).

Residues 1 to 33 (MTAIRGGSRRAPGLALALLGGVLLGACHGDENA) form the signal peptide. Residue Ser-311 is the Charge relay system of the active site.

Belongs to the D-(-)-3-hydroxybutyrate oligomer hydrolase family.

It is found in the secreted. It carries out the reaction (3R)-hydroxybutanoate dimer + H2O = 2 (R)-3-hydroxybutanoate + H(+). It participates in lipid metabolism; butanoate metabolism. Functionally, participates in the degradation of poly-3-hydroxybutyrate (PHB). It works downstream of poly(3-hydroxybutyrate) depolymerase, hydrolyzing D(-)-3-hydroxybutyrate oligomers of various length (3HB-oligomers) into 3HB-monomers. This is D-(-)-3-hydroxybutyrate oligomer hydrolase from Burkholderia mallei (strain SAVP1).